A 385-amino-acid polypeptide reads, in one-letter code: 1-deoxy-D-xylulose 5-phosphate reductoisomerase (385 aa).

NADPH is bound by residues threonine 13, glycine 14, serine 15, isoleucine 16, asparagine 40, and asparagine 122. Lysine 123 is a 1-deoxy-D-xylulose 5-phosphate binding site. Residue glutamate 124 coordinates NADPH. Aspartate 148 provides a ligand contact to Mn(2+). Serine 149, glutamate 150, serine 177, and histidine 200 together coordinate 1-deoxy-D-xylulose 5-phosphate. Position 150 (glutamate 150) interacts with Mn(2+). Glycine 206 contributes to the NADPH binding site. Residues serine 213, asparagine 218, lysine 219, and glutamate 222 each coordinate 1-deoxy-D-xylulose 5-phosphate. Residue glutamate 222 participates in Mn(2+) binding.

It belongs to the DXR family. It depends on Mg(2+) as a cofactor. Mn(2+) is required as a cofactor.

The catalysed reaction is 2-C-methyl-D-erythritol 4-phosphate + NADP(+) = 1-deoxy-D-xylulose 5-phosphate + NADPH + H(+). Its pathway is isoprenoid biosynthesis; isopentenyl diphosphate biosynthesis via DXP pathway; isopentenyl diphosphate from 1-deoxy-D-xylulose 5-phosphate: step 1/6. Catalyzes the NADPH-dependent rearrangement and reduction of 1-deoxy-D-xylulose-5-phosphate (DXP) to 2-C-methyl-D-erythritol 4-phosphate (MEP). This is 1-deoxy-D-xylulose 5-phosphate reductoisomerase from Francisella tularensis subsp. holarctica (strain FTNF002-00 / FTA).